Consider the following 370-residue polypeptide: Phospho-N-acetylmuramoyl-pentapeptide-transferase (370 aa).

The next 10 helical transmembrane spans lie at 29–49, 70–90, 93–113, 133–153, 177–197, 209–229, 251–271, 273–293, 298–318, and 349–369; these read AGLT…SFLL, GTPT…TLLW, LSNW…GLGF, KFIV…YYTG, GPVW…LIGS, GLAS…AYVS, VFLA…CHPA, VFMG…VAIM, ILLV…ILQV, and VIRF…TLKI.

This sequence belongs to the glycosyltransferase 4 family. MraY subfamily. Mg(2+) is required as a cofactor.

It localises to the cell inner membrane. It carries out the reaction UDP-N-acetyl-alpha-D-muramoyl-L-alanyl-gamma-D-glutamyl-meso-2,6-diaminopimeloyl-D-alanyl-D-alanine + di-trans,octa-cis-undecaprenyl phosphate = di-trans,octa-cis-undecaprenyl diphospho-N-acetyl-alpha-D-muramoyl-L-alanyl-D-glutamyl-meso-2,6-diaminopimeloyl-D-alanyl-D-alanine + UMP. It participates in cell wall biogenesis; peptidoglycan biosynthesis. Catalyzes the initial step of the lipid cycle reactions in the biosynthesis of the cell wall peptidoglycan: transfers peptidoglycan precursor phospho-MurNAc-pentapeptide from UDP-MurNAc-pentapeptide onto the lipid carrier undecaprenyl phosphate, yielding undecaprenyl-pyrophosphoryl-MurNAc-pentapeptide, known as lipid I. The chain is Phospho-N-acetylmuramoyl-pentapeptide-transferase from Leptospira biflexa serovar Patoc (strain Patoc 1 / Ames).